The primary structure comprises 149 residues: 3-dehydroquinate dehydratase (149 aa).

The active-site Proton acceptor is the Tyr26. Positions 77, 83, and 90 each coordinate substrate. His103 functions as the Proton donor in the catalytic mechanism. Substrate is bound by residues 104 to 105 and Arg114; that span reads LS.

This sequence belongs to the type-II 3-dehydroquinase family. Homododecamer.

It catalyses the reaction 3-dehydroquinate = 3-dehydroshikimate + H2O. It participates in metabolic intermediate biosynthesis; chorismate biosynthesis; chorismate from D-erythrose 4-phosphate and phosphoenolpyruvate: step 3/7. Catalyzes a trans-dehydration via an enolate intermediate. The chain is 3-dehydroquinate dehydratase from Haemophilus influenzae (strain PittGG).